We begin with the raw amino-acid sequence, 381 residues long: DNA replication and repair protein RecF (381 aa).

Residue 30–37 (GENAQGKT) participates in ATP binding.

Belongs to the RecF family.

Its subcellular location is the cytoplasm. Its function is as follows. The RecF protein is involved in DNA metabolism; it is required for DNA replication and normal SOS inducibility. RecF binds preferentially to single-stranded, linear DNA. It also seems to bind ATP. This is DNA replication and repair protein RecF from Lactobacillus delbrueckii subsp. bulgaricus (strain ATCC BAA-365 / Lb-18).